The chain runs to 639 residues: Transcription factor phomR' (639 aa).

The zn(2)-C6 fungal-type DNA-binding region spans 14-41; sequence CWTCRLRRKKCNEGGPPCDNCEARGIHC. Disordered stretches follow at residues 58 to 136 and 476 to 499; these read REEA…AGTG and LPRS…TGPE. Positions 68–108 are enriched in low complexity; the sequence is SGRGRSYSRSSSTAAAAAPKPAEGAMVTGGSSSSSRGSGSS.

Its subcellular location is the nucleus. In terms of biological role, transcription factor; part of the gene cluster that mediates the biosynthesis of the phomopsins, a group of hexapeptide mycotoxins which infects lupins and causes lupinosis disease in livestock. May play a role in the regulation of the production of phomopsins. The sequence is that of Transcription factor phomR' from Diaporthe leptostromiformis (Lupinosis disease fungus).